The primary structure comprises 137 residues: Large ribosomal subunit protein uL16 (137 aa).

The protein belongs to the universal ribosomal protein uL16 family. As to quaternary structure, part of the 50S ribosomal subunit.

Functionally, binds 23S rRNA and is also seen to make contacts with the A and possibly P site tRNAs. The polypeptide is Large ribosomal subunit protein uL16 (Pseudomonas syringae pv. tomato (strain ATCC BAA-871 / DC3000)).